Consider the following 358-residue polypeptide: 5,10-methenyltetrahydromethanopterin hydrogenase (358 aa).

This sequence belongs to the HMD family. Homotetramer.

It catalyses the reaction 5,10-methenyl-5,6,7,8-tetrahydromethanopterin + H2 = 5,10-methylenetetrahydromethanopterin + H(+). It functions in the pathway one-carbon metabolism; methanogenesis from CO(2); 5,10-methylene-5,6,7,8-tetrahydromethanopterin from 5,10-methenyl-5,6,7,8-tetrahydromethanopterin (hydrogen route): step 1/1. With respect to regulation, activity requires salt; 100 mM potassium phosphate, potassium chloride, and sodium chloride are equally effective. Its function is as follows. Catalyzes the reversible reduction of methenyl-H(4)MPT(+) to methylene-H(4)MPT. The polypeptide is 5,10-methenyltetrahydromethanopterin hydrogenase (Methanopyrus kandleri (strain AV19 / DSM 6324 / JCM 9639 / NBRC 100938)).